The primary structure comprises 138 residues: Transcription factor Atoh7-a (138 aa).

The bHLH domain occupies 33-85 (KRRLAANARERRRMQGLNTAFDSLRKVVPQWGEDKQLSKYETLQMALSYIMAL).

It localises to the nucleus. The protein localises to the perikaryon. The protein resides in the cell projection. Its subcellular location is the axon. Functionally, transcription factor that binds to DNA at the consensus sequence 5'-CAG[GC]TG-3'. Positively regulates the determination of retinal ganglion cell fate and formation of the optic nerve and retino-hypothalamic tract. Required for retinal circadian rhythm photoentrainment. Plays a role in brainstem auditory signaling and binaural processing. Regulates the differentiation of olfactory receptor neurons. During retinal neurogenesis, activates the transcription of several genes such as brn3d, coe3, cbfa2t2, glis2, elrC and xgadd45-gamma. This is Transcription factor Atoh7-a from Xenopus laevis (African clawed frog).